The primary structure comprises 122 residues: Large ribosomal subunit protein uL14 (122 aa).

It belongs to the universal ribosomal protein uL14 family. In terms of assembly, part of the 50S ribosomal subunit. Forms a cluster with proteins L3 and L19. In the 70S ribosome, L14 and L19 interact and together make contacts with the 16S rRNA in bridges B5 and B8.

In terms of biological role, binds to 23S rRNA. Forms part of two intersubunit bridges in the 70S ribosome. The chain is Large ribosomal subunit protein uL14 from Colwellia psychrerythraea (strain 34H / ATCC BAA-681) (Vibrio psychroerythus).